A 205-amino-acid polypeptide reads, in one-letter code: Beta-crystallin B2 (205 aa).

Alanine 2 carries the post-translational modification N-acetylalanine. Residues alanine 2–asparagine 16 are N-terminal arm. Beta/gamma crystallin 'Greek key' domains follow at residues proline 17–alanine 56 and glycine 57–lysine 101. A connecting peptide region spans residues valine 102–glutamate 106. Beta/gamma crystallin 'Greek key' domains are found at residues histidine 107–serine 148 and glycine 149–arginine 191. The interval methionine 193–asparagine 205 is C-terminal arm.

It belongs to the beta/gamma-crystallin family. As to quaternary structure, homo/heterodimer, or complexes of higher-order. The structure of beta-crystallin oligomers seems to be stabilized through interactions between the N-terminal arms.

Its function is as follows. Crystallins are the dominant structural components of the vertebrate eye lens. This chain is Beta-crystallin B2 (CRYBB2), found in Canis lupus familiaris (Dog).